A 466-amino-acid chain; its full sequence is Histidine--tRNA ligase (466 aa).

The protein belongs to the class-II aminoacyl-tRNA synthetase family. As to quaternary structure, homodimer.

Its subcellular location is the cytoplasm. The enzyme catalyses tRNA(His) + L-histidine + ATP = L-histidyl-tRNA(His) + AMP + diphosphate + H(+). This Xylella fastidiosa (strain 9a5c) protein is Histidine--tRNA ligase (hisS).